The following is a 1783-amino-acid chain: Trans-splicing factor Raa3, chloroplastic (1783 aa).

The transit peptide at 1-40 directs the protein to the chloroplast; sequence MKADLATAKGSSPAFSAPRTYRARLLSRCLNKCFNTVLVS. 8 disordered regions span residues 97 to 378, 420 to 484, 563 to 610, 652 to 709, 918 to 971, 1395 to 1427, 1476 to 1506, and 1620 to 1639; these read ATTH…VGVN, ATSA…VAAQ, ARVG…SATK, STEP…SPAA, AAPT…QRAS, RDAKRHVRQSAAAAAAAAAAAQDQRQEQHQQHQ, PAPAHMQQQPQSSGTGCQKSRRRRMRYRRSR, and VKGRGRGRRTAARATTDVQG. Positions 105–118 are enriched in gly residues; the sequence is DSGGQGPAAAGGRG. Composition is skewed to low complexity over residues 126-157, 186-205, and 224-242; these read QAAASAATTVSAAPQTGATKPAATAKTTPQRP, AVDAASDAAPDVAAASPAPA, and AGKPRASGRAPAAPGVGPQ. The segment covering 256 to 273 has biased composition (basic and acidic residues); sequence DESHMGLTHRDQGHDERI. Over residues 277-289 the composition is skewed to low complexity; that stretch reads AGEAWKAGAVAAP. The segment covering 307-316 has biased composition (polar residues); the sequence is LASSALGTHS. Composition is skewed to low complexity over residues 343 to 374, 420 to 436, 577 to 599, 655 to 669, 676 to 709, 928 to 970, and 1403 to 1417; these read SGSSSSSSGRNSSSNSNTSTSSTSNGVTITSN, ATSAASSSTSSASSSSS, RPVQGQSGQVPQVGQGPVQSQPG, PLAASAPTTSLASAS, SSSNAHSSAAASEAAAGTVRAPTDTAAPAASPAA, SAAA…PQRA, and QSAAAAAAAAAAAQD. Composition is skewed to basic residues over residues 1494-1506 and 1620-1630; these read KSRRRRMRYRRSR and VKGRGRGRRTA. Residues 1713–1772 form the RAP domain; sequence LAVGAAAGGAVIRNSRWLLSGAGALRRRLLTHAGWLVVPVRERQWKDLRSAEQQRRVVRE.

As to quaternary structure, part of a 1700 kDa complex that includes the precursor RNA to exon 1 and the tscA RNA.

Its subcellular location is the plastid. It localises to the chloroplast stroma. Its function is as follows. Required for trans-splicing of exons 1 and 2 of the chloroplast encoded psaA mRNA (a group II intron). May be required for stability of the chloroplast RNA-protein complex in which it is found. In Chlamydomonas reinhardtii (Chlamydomonas smithii), this protein is Trans-splicing factor Raa3, chloroplastic (RAA3).